Here is a 505-residue protein sequence, read N- to C-terminus: ATP synthase subunit alpha (505 aa).

170–177 lines the ATP pocket; the sequence is GDRQTGKT.

Belongs to the ATPase alpha/beta chains family. F-type ATPases have 2 components, CF(1) - the catalytic core - and CF(0) - the membrane proton channel. CF(1) has five subunits: alpha(3), beta(3), gamma(1), delta(1), epsilon(1). CF(0) has four main subunits: a(1), b(1), b'(1) and c(9-12).

Its subcellular location is the cellular thylakoid membrane. It catalyses the reaction ATP + H2O + 4 H(+)(in) = ADP + phosphate + 5 H(+)(out). Its function is as follows. Produces ATP from ADP in the presence of a proton gradient across the membrane. The alpha chain is a regulatory subunit. In Trichodesmium erythraeum (strain IMS101), this protein is ATP synthase subunit alpha.